Consider the following 187-residue polypeptide: Small ribosomal subunit protein uS7 (187 aa).

This sequence belongs to the universal ribosomal protein uS7 family. In terms of assembly, part of the 30S ribosomal subunit.

Functionally, one of the primary rRNA binding proteins, it binds directly to 16S rRNA where it nucleates assembly of the head domain of the 30S subunit. Is located at the subunit interface close to the decoding center. In Methanosphaera stadtmanae (strain ATCC 43021 / DSM 3091 / JCM 11832 / MCB-3), this protein is Small ribosomal subunit protein uS7.